An 85-amino-acid chain; its full sequence is Transcriptional repressor protein KorC (85 aa).

The segment at residues 28 to 47 is a DNA-binding region (H-T-H motif); that stretch reads EVLRLAGLTGGKAAKVLGLG.

Functionally, acts with KorA as corepressor in the control of the kilC and kilE operons. This is Transcriptional repressor protein KorC (korC) from Escherichia coli.